The following is a 294-amino-acid chain: 4-hydroxy-tetrahydrodipicolinate synthase (294 aa).

T45 contributes to the pyruvate binding site. Y133 functions as the Proton donor/acceptor in the catalytic mechanism. The active-site Schiff-base intermediate with substrate is the K162. Pyruvate is bound at residue I204.

The protein belongs to the DapA family. Homotetramer; dimer of dimers.

The protein localises to the cytoplasm. The enzyme catalyses L-aspartate 4-semialdehyde + pyruvate = (2S,4S)-4-hydroxy-2,3,4,5-tetrahydrodipicolinate + H2O + H(+). The protein operates within amino-acid biosynthesis; L-lysine biosynthesis via DAP pathway; (S)-tetrahydrodipicolinate from L-aspartate: step 3/4. Functionally, catalyzes the condensation of (S)-aspartate-beta-semialdehyde [(S)-ASA] and pyruvate to 4-hydroxy-tetrahydrodipicolinate (HTPA). The chain is 4-hydroxy-tetrahydrodipicolinate synthase from Bartonella tribocorum (strain CIP 105476 / IBS 506).